The primary structure comprises 93 residues: UPF0058 protein AF_0738 (93 aa).

Belongs to the UPF0058 family.

The protein is UPF0058 protein AF_0738 of Archaeoglobus fulgidus (strain ATCC 49558 / DSM 4304 / JCM 9628 / NBRC 100126 / VC-16).